A 601-amino-acid chain; its full sequence is DNA ligase (601 aa).

Asp-258 provides a ligand contact to ATP. Lys-260 (N6-AMP-lysine intermediate) is an active-site residue. ATP is bound by residues Arg-265, Arg-280, Glu-310, Phe-350, Arg-427, and Lys-433. The interval 568–601 (DKSPEDATTTDEILEMYNKQPKKKIESPPIDESV) is disordered.

Belongs to the ATP-dependent DNA ligase family. Mg(2+) is required as a cofactor.

It catalyses the reaction ATP + (deoxyribonucleotide)n-3'-hydroxyl + 5'-phospho-(deoxyribonucleotide)m = (deoxyribonucleotide)n+m + AMP + diphosphate.. Functionally, DNA ligase that seals nicks in double-stranded DNA during DNA replication, DNA recombination and DNA repair. This chain is DNA ligase, found in Saccharolobus islandicus (strain Y.G.57.14 / Yellowstone #1) (Sulfolobus islandicus).